The sequence spans 407 residues: Argininosuccinate synthase (407 aa).

ATP-binding positions include 16-24 (AYSGGLDTS) and Ala-44. Residues Tyr-96 and Ser-101 each contribute to the L-citrulline site. An ATP-binding site is contributed by Gly-126. Residues Thr-128, Asn-132, and Asp-133 each coordinate L-aspartate. Asn-132 is a binding site for L-citrulline. Residues Arg-136, Ser-185, Ser-194, Glu-270, and Tyr-282 each coordinate L-citrulline.

The protein belongs to the argininosuccinate synthase family. Type 1 subfamily. In terms of assembly, homotetramer.

The protein resides in the cytoplasm. It carries out the reaction L-citrulline + L-aspartate + ATP = 2-(N(omega)-L-arginino)succinate + AMP + diphosphate + H(+). Its pathway is amino-acid biosynthesis; L-arginine biosynthesis; L-arginine from L-ornithine and carbamoyl phosphate: step 2/3. In Shewanella sp. (strain ANA-3), this protein is Argininosuccinate synthase.